A 133-amino-acid polypeptide reads, in one-letter code: Interleukin-4 (133 aa).

An N-terminal signal peptide occupies residues 1–24 (MGLTYQLIPALVCLLAFTSTFVHG). N-linked (GlcNAc...) asparagine glycosylation is found at N28, N45, N62, N84, N96, and N102. 2 cysteine pairs are disulfide-bonded: C48–C85 and C70–C113.

It belongs to the IL-4/IL-13 family.

The protein resides in the secreted. Participates in at least several B-cell activation processes as well as of other cell types. It is a costimulator of DNA-synthesis. It induces the expression of class II MHC molecules on resting B-cells. It enhances both secretion and cell surface expression of IgE and IgG1. It also regulates the expression of the low affinity Fc receptor for IgE (CD23) on both lymphocytes and monocytes. Positively regulates IL31RA expression in macrophages. Stimulates autophagy in dendritic cells by interfering with mTORC1 signaling and through the induction of RUFY4. The protein is Interleukin-4 (IL4) of Felis catus (Cat).